The primary structure comprises 290 residues: Fat storage-inducing transmembrane protein 1 (290 aa).

5 helical membrane passes run 1–21 (MFLN…LGNT), 26–46 (HFHL…LWVS), 65–85 (SGWG…SFSV), 173–193 (LLLC…GPYL), and 205–225 (ILFL…LCLL).

It belongs to the FIT family. FIT1 subfamily.

Its subcellular location is the endoplasmic reticulum membrane. Its function is as follows. May play an important role in the formation of lipid droplets (LDs) which are storage organelles at the center of lipid and energy homeostasis. May directly bind to diacylglycerol (DAGs) and triacylglycerol. This Danio rerio (Zebrafish) protein is Fat storage-inducing transmembrane protein 1 (fitm1l).